The primary structure comprises 515 residues: Peroxisomal catalase A (515 aa).

Ser-2 carries the post-translational modification N-acetylserine. Active-site residues include His-70 and Asn-143. Tyr-355 lines the heme pocket. The Microbody targeting signal signature appears at 513–515 (SKF).

Belongs to the catalase family. As to quaternary structure, homotetramer. It depends on heme as a cofactor.

Its subcellular location is the peroxisome matrix. It catalyses the reaction 2 H2O2 = O2 + 2 H2O. In terms of biological role, catalyzes the degradation of hydrogen peroxide (H(2)O(2)) generated by peroxisomal oxidases to water and oxygen, thereby protecting cells from the toxic effects of hydrogen peroxide. The polypeptide is Peroxisomal catalase A (CTA1) (Saccharomyces cerevisiae (strain ATCC 204508 / S288c) (Baker's yeast)).